The chain runs to 400 residues: Elongation factor Tu 2 (400 aa).

A tr-type G domain is found at 10 to 209 (KPHVNIGTIG…AVDEYIPTPQ (200 aa)). The interval 19–26 (GHVDHGKT) is G1. 19–26 (GHVDHGKT) contributes to the GTP binding site. A Mg(2+)-binding site is contributed by Thr-26. Positions 60–64 (GITIN) are G2. The tract at residues 81-84 (DCPG) is G3. Residues 81-85 (DCPGH) and 136-139 (NKAD) each bind GTP. The tract at residues 136 to 139 (NKAD) is G4. The interval 174–176 (SAL) is G5.

It belongs to the TRAFAC class translation factor GTPase superfamily. Classic translation factor GTPase family. EF-Tu/EF-1A subfamily. In terms of assembly, monomer.

The protein resides in the cytoplasm. The catalysed reaction is GTP + H2O = GDP + phosphate + H(+). Functionally, GTP hydrolase that promotes the GTP-dependent binding of aminoacyl-tRNA to the A-site of ribosomes during protein biosynthesis. This Pelotomaculum thermopropionicum (strain DSM 13744 / JCM 10971 / SI) protein is Elongation factor Tu 2.